The chain runs to 106 residues: Large ribosomal subunit protein eL42Q (106 aa).

The protein belongs to the eukaryotic ribosomal protein eL42 family.

The polypeptide is Large ribosomal subunit protein eL42Q (RIM-C) (Candida maltosa (Yeast)).